Reading from the N-terminus, the 146-residue chain is 3-dehydroquinate dehydratase (146 aa).

Residue Tyr22 is the Proton acceptor of the active site. Asn73, His79, and Asp86 together coordinate substrate. The active-site Proton donor is His99. Residues 100-101 and Arg110 each bind substrate; that span reads LS.

It belongs to the type-II 3-dehydroquinase family. Homododecamer.

The catalysed reaction is 3-dehydroquinate = 3-dehydroshikimate + H2O. Its pathway is metabolic intermediate biosynthesis; chorismate biosynthesis; chorismate from D-erythrose 4-phosphate and phosphoenolpyruvate: step 3/7. Its function is as follows. Catalyzes a trans-dehydration via an enolate intermediate. This Parasynechococcus marenigrum (strain WH8102) protein is 3-dehydroquinate dehydratase.